Consider the following 92-residue polypeptide: Putative regulatory protein CTN_0877 (92 aa).

Belongs to the RemA family.

This chain is Putative regulatory protein CTN_0877, found in Thermotoga neapolitana (strain ATCC 49049 / DSM 4359 / NBRC 107923 / NS-E).